The sequence spans 421 residues: MKLLVVGSGGREHAIAKKLLASKGVDQVFVAPGNDGMTLDGLDLVNIVVSEHSRLIAFAKENEISWAFIGPDDALAAGIVDDFNSAGLRAFGPTKAAAELEWSKDFAKEIMVKYNVPTAAYGTFSDFEKAKAYIEEQGAPIVVKADGLALGKGVVVAETVEQAVEAAQEMLLDNKFGDSGARVVIEEFLDGEEFSLFAFVNGDKFYIMPTAQDHKRAFDGDKGPNTGGMGAYAPVPHLPQSVVDTAVETIVRPVLEGMVAEGRPYLGVLYVGLILTADGPKVIEFNSRFGDPETQIILPRLTSDFAQNIDDIMMGIEPYITWQNDGVTLGVVVASEGYPLDYEKGVPLPEKTDGDIITYYAGAKFAENSELLLSNGGRVYMLVTTEDSVKAGQDKIYTQLAQQDTTGLFYRNDIGNKAIKE.

The ATP-grasp domain occupies 108 to 314 (KEIMVKYNVP…FAQNIDDIMM (207 aa)). 134–195 (IEEQGAPIVV…EEFLDGEEFS (62 aa)) is a binding site for ATP. The Mg(2+) site is built by Glu-284 and Asn-286.

The protein belongs to the GARS family. It depends on Mg(2+) as a cofactor. Mn(2+) is required as a cofactor.

It carries out the reaction 5-phospho-beta-D-ribosylamine + glycine + ATP = N(1)-(5-phospho-beta-D-ribosyl)glycinamide + ADP + phosphate + H(+). Its pathway is purine metabolism; IMP biosynthesis via de novo pathway; N(1)-(5-phospho-D-ribosyl)glycinamide from 5-phospho-alpha-D-ribose 1-diphosphate: step 2/2. This chain is Phosphoribosylamine--glycine ligase, found in Streptococcus pyogenes serotype M6 (strain ATCC BAA-946 / MGAS10394).